A 292-amino-acid chain; its full sequence is Acetylglutamate kinase (292 aa).

Substrate is bound by residues 62 to 63 (GG), R84, and N188.

It belongs to the acetylglutamate kinase family. ArgB subfamily.

Its subcellular location is the cytoplasm. The enzyme catalyses N-acetyl-L-glutamate + ATP = N-acetyl-L-glutamyl 5-phosphate + ADP. It functions in the pathway amino-acid biosynthesis; L-arginine biosynthesis; N(2)-acetyl-L-ornithine from L-glutamate: step 2/4. In terms of biological role, catalyzes the ATP-dependent phosphorylation of N-acetyl-L-glutamate. This is Acetylglutamate kinase from Methanosarcina mazei (strain ATCC BAA-159 / DSM 3647 / Goe1 / Go1 / JCM 11833 / OCM 88) (Methanosarcina frisia).